A 149-amino-acid chain; its full sequence is Large ribosomal subunit protein uL11 (149 aa).

It belongs to the universal ribosomal protein uL11 family. As to quaternary structure, part of the ribosomal stalk of the 50S ribosomal subunit. Interacts with L10 and the large rRNA to form the base of the stalk. L10 forms an elongated spine to which L12 dimers bind in a sequential fashion forming a multimeric L10(L12)X complex. One or more lysine residues are methylated.

Forms part of the ribosomal stalk which helps the ribosome interact with GTP-bound translation factors. The sequence is that of Large ribosomal subunit protein uL11 from Methylobacterium radiotolerans (strain ATCC 27329 / DSM 1819 / JCM 2831 / NBRC 15690 / NCIMB 10815 / 0-1).